Reading from the N-terminus, the 388-residue chain is Succinate--CoA ligase [ADP-forming] subunit beta (388 aa).

In terms of domain architecture, ATP-grasp spans 9–244 (KALFAEYGLP…PSQDDAREAH (236 aa)). Residues Lys-46, 53 to 55 (GRG), Glu-99, Thr-102, and Glu-107 each bind ATP. Positions 199 and 213 each coordinate Mg(2+). Residues Asn-264 and 321–323 (GIV) each bind substrate.

This sequence belongs to the succinate/malate CoA ligase beta subunit family. In terms of assembly, heterotetramer of two alpha and two beta subunits. The cofactor is Mg(2+).

The enzyme catalyses succinate + ATP + CoA = succinyl-CoA + ADP + phosphate. It catalyses the reaction GTP + succinate + CoA = succinyl-CoA + GDP + phosphate. Its pathway is carbohydrate metabolism; tricarboxylic acid cycle; succinate from succinyl-CoA (ligase route): step 1/1. Functionally, succinyl-CoA synthetase functions in the citric acid cycle (TCA), coupling the hydrolysis of succinyl-CoA to the synthesis of either ATP or GTP and thus represents the only step of substrate-level phosphorylation in the TCA. The beta subunit provides nucleotide specificity of the enzyme and binds the substrate succinate, while the binding sites for coenzyme A and phosphate are found in the alpha subunit. The chain is Succinate--CoA ligase [ADP-forming] subunit beta from Shewanella amazonensis (strain ATCC BAA-1098 / SB2B).